Consider the following 358-residue polypeptide: Mannonate dehydratase (358 aa).

It belongs to the mannonate dehydratase family. Fe(2+) is required as a cofactor. The cofactor is Mn(2+).

It carries out the reaction D-mannonate = 2-dehydro-3-deoxy-D-gluconate + H2O. It participates in carbohydrate metabolism; pentose and glucuronate interconversion. Functionally, catalyzes the dehydration of D-mannonate. This chain is Mannonate dehydratase, found in Shouchella clausii (strain KSM-K16) (Alkalihalobacillus clausii).